The sequence spans 192 residues: Peptide methionine sulfoxide reductase MsrA 1 (192 aa).

Residue Cys-25 is part of the active site.

This sequence belongs to the MsrA Met sulfoxide reductase family.

It carries out the reaction L-methionyl-[protein] + [thioredoxin]-disulfide + H2O = L-methionyl-(S)-S-oxide-[protein] + [thioredoxin]-dithiol. The catalysed reaction is [thioredoxin]-disulfide + L-methionine + H2O = L-methionine (S)-S-oxide + [thioredoxin]-dithiol. Its function is as follows. Has an important function as a repair enzyme for proteins that have been inactivated by oxidation. Catalyzes the reversible oxidation-reduction of methionine sulfoxide in proteins to methionine. The sequence is that of Peptide methionine sulfoxide reductase MsrA 1 from Rhodopirellula baltica (strain DSM 10527 / NCIMB 13988 / SH1).